The primary structure comprises 327 residues: Zinc transport protein ZntB (327 aa).

Residues 1-273 (MEAIKGSEVN…ARRTYTMSLM (273 aa)) are Cytoplasmic-facing. Residues 274 to 294 (AMVFLPSTFLTGLFGVNLGGI) form a helical membrane-spanning segment. Residues 295–300 (PGGAWH) are Periplasmic-facing. A helical transmembrane segment spans residues 301-321 (FGFSMFCILLVVLIGGVTLWL). At 322–327 (HRSKWL) the chain is on the cytoplasmic side.

Belongs to the CorA metal ion transporter (MIT) (TC 1.A.35) family.

Its subcellular location is the cell inner membrane. The enzyme catalyses Zn(2+)(out) + H(+)(out) = Zn(2+)(in) + H(+)(in). Functionally, zinc transporter. Acts as a Zn(2+):proton symporter, which likely mediates zinc ion uptake. This is Zinc transport protein ZntB from Citrobacter koseri (strain ATCC BAA-895 / CDC 4225-83 / SGSC4696).